The sequence spans 388 residues: Na(+)/H(+) antiporter NhaA (388 aa).

Over 1–11 (MKHLHRFFSSD) the chain is Cytoplasmic. The helical transmembrane segment at 12 to 31 (ASGGIILIIAAILAMMMANS) threads the bilayer. Over 32 to 58 (GATSGWYHDFLETPVQLRVGSLEINKN) the chain is Periplasmic. A helical membrane pass occupies residues 59–80 (MLLWINDALMAVFFLLVGLEVK). At 81-96 (RELMQGSLASLRQAAF) the chain is on the cytoplasmic side. Residues 97–116 (PVIAAIGGMIVPALLYLAFN) form a helical membrane-spanning segment. Topologically, residues 117-122 (YADPIT) are periplasmic. Residues 123-130 (REGWAIPA) traverse the membrane as a helical segment. The Cytoplasmic segment spans residues 131 to 154 (ATDIAFALGVLALLGSRVPLALKI). A helical transmembrane segment spans residues 155-176 (FLMALAIIDDLGAIIIIALFYT). Residues 177-180 (NDLS) lie on the Periplasmic side of the membrane. The helical transmembrane segment at 181–200 (MASLGVAAVAIAVLAVLNLC) threads the bilayer. Residues 201–204 (GVRR) lie on the Cytoplasmic side of the membrane. A helical membrane pass occupies residues 205–222 (TGVYILVGVVLWTAVLKS). Glycine 223 is a topological domain (periplasmic). A helical membrane pass occupies residues 224 to 236 (VHATLAGVIVGFF). Residues 237–253 (IPLKEKHGRSTAKRLEH) lie on the Cytoplasmic side of the membrane. The chain crosses the membrane as a helical span at residues 254–272 (VLHPWVAYLILPLFAFANA). Over 273 to 286 (GVSLQGVTLDGLTS) the chain is Periplasmic. A helical membrane pass occupies residues 287-310 (ILPLGIIAGLLIGKPLGISLFCWL). Over 311–339 (ALRLKLAHLPEGTTYQQIMAVGILCGIGF) the chain is Cytoplasmic. Residues 340 to 350 (TMSIFIASLAF) traverse the membrane as a helical segment. The Periplasmic portion of the chain corresponds to 351–357 (GSVDPEL). Residues 358–380 (INWAKLGILVGSISSAVIGYSWL) traverse the membrane as a helical segment. Residues 381–388 (RVRLRPSV) are Cytoplasmic-facing.

The protein belongs to the NhaA Na(+)/H(+) (TC 2.A.33) antiporter family.

It localises to the cell inner membrane. It carries out the reaction Na(+)(in) + 2 H(+)(out) = Na(+)(out) + 2 H(+)(in). Na(+)/H(+) antiporter that extrudes sodium in exchange for external protons. The protein is Na(+)/H(+) antiporter NhaA of Shigella dysenteriae serotype 1 (strain Sd197).